We begin with the raw amino-acid sequence, 693 residues long: Elongation factor G (693 aa).

In terms of domain architecture, tr-type G spans 8-282 (EKTRNIGIMA…AVIDYLPSPL (275 aa)). Residues 17-24 (AHVDAGKT), 81-85 (DTPGH), and 135-138 (NKMD) each bind GTP.

It belongs to the TRAFAC class translation factor GTPase superfamily. Classic translation factor GTPase family. EF-G/EF-2 subfamily.

The protein resides in the cytoplasm. Catalyzes the GTP-dependent ribosomal translocation step during translation elongation. During this step, the ribosome changes from the pre-translocational (PRE) to the post-translocational (POST) state as the newly formed A-site-bound peptidyl-tRNA and P-site-bound deacylated tRNA move to the P and E sites, respectively. Catalyzes the coordinated movement of the two tRNA molecules, the mRNA and conformational changes in the ribosome. In Streptococcus gordonii (strain Challis / ATCC 35105 / BCRC 15272 / CH1 / DL1 / V288), this protein is Elongation factor G.